A 1050-amino-acid polypeptide reads, in one-letter code: Calmodulin-binding transcription activator 2 (1050 aa).

Positions 15-141 (IKQLLSEAQH…YLEVKGNRMS (127 aa)) form a DNA-binding region, CG-1. Polar residues-rich tracts occupy residues 141 to 171 (STSG…SSIL) and 183 to 196 (SRQA…NPEP). Disordered regions lie at residues 141-196 (STSG…NPEP) and 223-246 (NRDG…SGDV). 2 ANK repeats span residues 661–690 (DGQG…SINF) and 694–723 (NGWS…DAGA). 2 IQ domains span residues 870–899 (VHAA…RIVK) and 893–922 (IRQR…SVGL). Residues 918-940 (WSVGLLEKIILRWRRKGSGLRGF) form a calmodulin-binding region. The stretch at 957 to 985 (QEDDYDFLKEGRKQTEERLQKALTRVKSM) forms a coiled coil. Ser984 carries the post-translational modification Phosphoserine.

It belongs to the CAMTA family. In terms of tissue distribution, expressed in roots, stems, old leaves, petals, sepals, top of carpels, stigmas, stamen filaments, anthers and siliques, but not in pollen.

It localises to the nucleus. Its function is as follows. Transcription activator that binds to the DNA consensus sequence 5'-[ACG]CGCG[GTC]-3'. Regulates transcriptional activity in response to calcium signals. Binds calmodulin in a calcium-dependent manner. Involved in freezing tolerance in association with CAMTA1 and CAMTA3. Contributes together with CAMTA1 and CAMTA3 to the positive regulation of the cold-induced expression of DREB1A/CBF3, DREB1B/CBF1 and DREB1C/CBF2. Involved together with CAMTA3 and CAMTA4 in the positive regulation of a general stress response. Involved in tolerance to aluminum. Binds to the promoter of ALMT1 transporter and contributes to the positive regulation of aluminum-induced expression of ALMT1. The sequence is that of Calmodulin-binding transcription activator 2 from Arabidopsis thaliana (Mouse-ear cress).